A 408-amino-acid chain; its full sequence is Acetate kinase (408 aa).

A Mg(2+)-binding site is contributed by asparagine 7. Residue lysine 14 participates in ATP binding. Substrate is bound at residue arginine 98. Residue aspartate 155 is the Proton donor/acceptor of the active site. ATP is bound by residues 214 to 218 (HLGNG), 289 to 291 (DLR), and 337 to 341 (GVGEN). Glutamate 390 is a Mg(2+) binding site.

This sequence belongs to the acetokinase family. Homodimer. It depends on Mg(2+) as a cofactor. Mn(2+) serves as cofactor.

It is found in the cytoplasm. The catalysed reaction is acetate + ATP = acetyl phosphate + ADP. Its pathway is metabolic intermediate biosynthesis; acetyl-CoA biosynthesis; acetyl-CoA from acetate: step 1/2. In terms of biological role, catalyzes the formation of acetyl phosphate from acetate and ATP. Can also catalyze the reverse reaction. This is Acetate kinase from Cyanothece sp. (strain PCC 7425 / ATCC 29141).